A 202-amino-acid chain; its full sequence is Large ribosomal subunit protein uL4 (202 aa).

Residues 42-52 show a composition bias toward polar residues; the sequence is GTKAQKSRSQV. The tract at residues 42 to 70 is disordered; it reads GTKAQKSRSQVSGTTKKSKKQKGGGARHG.

Belongs to the universal ribosomal protein uL4 family. Part of the 50S ribosomal subunit.

One of the primary rRNA binding proteins, this protein initially binds near the 5'-end of the 23S rRNA. It is important during the early stages of 50S assembly. It makes multiple contacts with different domains of the 23S rRNA in the assembled 50S subunit and ribosome. Its function is as follows. Forms part of the polypeptide exit tunnel. The polypeptide is Large ribosomal subunit protein uL4 (Xylella fastidiosa (strain 9a5c)).